We begin with the raw amino-acid sequence, 888 residues long: 3-hydroxy-3-methylglutaryl-coenzyme A reductase (888 aa).

Residues methionine 1–histidine 9 are Cytoplasmic-facing. The helical transmembrane segment at glycine 10–glycine 39 threads the bilayer. The Lumenal portion of the chain corresponds to asparagine 40–aspartate 56. Residues valine 57–phenylalanine 78 traverse the membrane as a helical segment. Positions aspartate 61–leucine 218 constitute an SSD domain. The short motif at tyrosine 75 to phenylalanine 78 is the INSIG-binding motif element. Topologically, residues glutamine 79–lysine 89 are cytoplasmic. A Glycyl lysine isopeptide (Lys-Gly) (interchain with G-Cter in ubiquitin) cross-link involves residue lysine 89. Residues tyrosine 90–leucine 114 form a helical membrane-spanning segment. Topologically, residues aspartate 115–glutamate 123 are lumenal. Residues alanine 124–serine 149 form a helical membrane-spanning segment. Residues glutamine 150 to arginine 159 are Cytoplasmic-facing. A helical membrane pass occupies residues glycine 160–valine 187. Topologically, residues arginine 188–glutamate 191 are lumenal. The chain crosses the membrane as a helical span at residues isoleucine 192–leucine 220. Topologically, residues glutamate 221 to lysine 248 are cytoplasmic. Lysine 248 is covalently cross-linked (Glycyl lysine isopeptide (Lys-Gly) (interchain with G-Cter in ubiquitin)). The chain crosses the membrane as a helical span at residues proline 249–alanine 275. At aspartate 276–lysine 314 the chain is on the lumenal side. N-linked (GlcNAc...) asparagine glycosylation is found at asparagine 281 and asparagine 296. Residues methionine 315–phenylalanine 339 form a helical membrane-spanning segment. Topologically, residues glutamate 340 to alanine 888 are cytoplasmic. Catalysis depends on charge relay system residues glutamate 559, lysine 691, and aspartate 767. Histidine 866 functions as the Proton donor in the catalytic mechanism. Residue serine 872 is modified to Phosphoserine; by AMPK.

The protein belongs to the HMG-CoA reductase family. Homotetramer. Homodimer. Interacts (via its SSD) with INSIG1; the interaction, accelerated by sterols, leads to the recruitment of HMGCR to AMFR/gp78 for its ubiquitination by the sterol-mediated ERAD pathway. Interacts with UBIAD1. Post-translationally, undergoes sterol-mediated ubiquitination and ER-associated degradation (ERAD). Accumulation of sterols in the endoplasmic reticulum (ER) membrane, triggers binding of the reductase to the ER membrane protein INSIG1 or INSIG2. The INSIG1 binding leads to the recruitment of the ubiquitin ligase, AMFR/gp78, RNF139 or RNF145, initiating ubiquitination of the reductase. The ubiquitinated reductase is then extracted from the ER membrane and delivered to cytosolic 26S proteosomes by a mechanism probably mediated by the ATPase Valosin-containing protein VCP/p97. The INSIG2-binding leads to the recruitment of the ubiquitin ligase RNF139, initiating ubiquitination of the reductase. Lys-248 is the main site of ubiquitination. Ubiquitination is enhanced by the presence of a geranylgeranylated protein. In terms of processing, N-glycosylated. Deglycosylated by NGLY1 on release from the endoplasmic reticulum (ER) in a sterol-mediated manner. Phosphorylated. Phosphorylation at Ser-872 reduces the catalytic activity.

The protein localises to the endoplasmic reticulum membrane. It localises to the peroxisome membrane. The catalysed reaction is (R)-mevalonate + 2 NADP(+) + CoA = (3S)-3-hydroxy-3-methylglutaryl-CoA + 2 NADPH + 2 H(+). It participates in metabolic intermediate biosynthesis; (R)-mevalonate biosynthesis; (R)-mevalonate from acetyl-CoA: step 3/3. Regulated by a negative feedback mechanism through sterols and non-sterol metabolites derived from mevalonate. Phosphorylation at Ser-872 down-regulates the catalytic activity. In terms of biological role, catalyzes the conversion of (3S)-hydroxy-3-methylglutaryl-CoA (HMG-CoA) to mevalonic acid, the rate-limiting step in the synthesis of cholesterol and other isoprenoids, thus plays a critical role in cellular cholesterol homeostasis. The chain is 3-hydroxy-3-methylglutaryl-coenzyme A reductase (HMGCR) from Oryctolagus cuniculus (Rabbit).